The following is a 122-amino-acid chain: uncharacterized protein (122 aa).

The N-terminal stretch at 1–28 (MVPGPPESVVRFFLWFCFLLPPTRKASC) is a signal peptide. A glycan (N-linked (GlcNAc...) asparagine) is linked at N49.

Its subcellular location is the secreted. This is an uncharacterized protein from Homo sapiens (Human).